The sequence spans 466 residues: Glucose-6-phosphate 1-dehydrogenase 1 (466 aa).

Residues serine 48, 88–89 (DV), and lysine 141 contribute to the NADP(+) site. Residues histidine 171, lysine 175, glutamate 209, and aspartate 228 each coordinate substrate. Histidine 233 serves as the catalytic Proton acceptor. Residues lysine 319 and lysine 324 each contribute to the substrate site.

The protein belongs to the glucose-6-phosphate dehydrogenase family.

The catalysed reaction is D-glucose 6-phosphate + NADP(+) = 6-phospho-D-glucono-1,5-lactone + NADPH + H(+). The protein operates within carbohydrate degradation; pentose phosphate pathway; D-ribulose 5-phosphate from D-glucose 6-phosphate (oxidative stage): step 1/3. Functionally, catalyzes the oxidation of glucose 6-phosphate to 6-phosphogluconolactone. The chain is Glucose-6-phosphate 1-dehydrogenase 1 from Mycobacterium tuberculosis (strain ATCC 25618 / H37Rv).